We begin with the raw amino-acid sequence, 1955 residues long: Callose synthase 3 (1955 aa).

Residues M1–R488 lie on the Cytoplasmic side of the membrane. Residues M489–Q509 form a helical membrane-spanning segment. The Extracellular segment spans residues P510–K521. Residues V522 to I542 traverse the membrane as a helical segment. At L543–R558 the chain is on the cytoplasmic side. The chain crosses the membrane as a helical span at residues Y559 to Y579. Residues S580–L604 are Extracellular-facing. Residues F605–F625 traverse the membrane as a helical segment. Residues P626–S660 lie on the Cytoplasmic side of the membrane. A helical membrane pass occupies residues A661–F681. Topologically, residues S682–N717 are extracellular. The chain crosses the membrane as a helical span at residues I718–I738. The Cytoplasmic segment spans residues W739 to Y1517. Residues F1518–L1538 form a helical membrane-spanning segment. The Extracellular segment spans residues Y1539–Q1566. A helical membrane pass occupies residues I1567–M1587. The Cytoplasmic portion of the chain corresponds to E1588–T1597. The chain crosses the membrane as a helical span at residues A1598–L1618. Over G1619 to H1661 the chain is Extracellular. A helical membrane pass occupies residues F1662–Y1682. The Cytoplasmic portion of the chain corresponds to R1683 to Y1688. Residues L1689–F1709 form a helical membrane-spanning segment. The Extracellular segment spans residues N1710–R1761. The chain crosses the membrane as a helical span at residues G1762 to Y1782. Over H1783–N1792 the chain is Cytoplasmic. A helical membrane pass occupies residues F1793–V1813. At S1814–G1833 the chain is on the extracellular side. The helical transmembrane segment at L1834–I1854 threads the bilayer. The Cytoplasmic segment spans residues Q1855–D1856. A helical membrane pass occupies residues I1857–A1877. Over C1878–E1899 the chain is Extracellular. A helical membrane pass occupies residues I1900 to S1920. Residues E1921–E1955 are Cytoplasmic-facing.

It belongs to the glycosyltransferase 48 family.

It is found in the cell membrane. It catalyses the reaction [(1-&gt;3)-beta-D-glucosyl](n) + UDP-alpha-D-glucose = [(1-&gt;3)-beta-D-glucosyl](n+1) + UDP + H(+). Functionally, involved in callose synthesis at the forming cell plate during cytokinesis. During plant growth and development, callose is found as a transitory component of the cell plate in dividing cells, is a major component of pollen mother cell walls and pollen tubes, and is found as a structural component of plasmodesmatal canals. The protein is Callose synthase 3 (CALS3) of Arabidopsis thaliana (Mouse-ear cress).